A 46-amino-acid chain; its full sequence is Endochitinase 2 (46 aa).

The protein belongs to the glycosyl hydrolase 19 family. Chitinase class I subfamily.

It carries out the reaction Random endo-hydrolysis of N-acetyl-beta-D-glucosaminide (1-&gt;4)-beta-linkages in chitin and chitodextrins.. Defense against chitin-containing fungal and bacterial pathogens. This is Endochitinase 2 from Arachis hypogaea (Peanut).